Reading from the N-terminus, the 436-residue chain is Phosphomethylpyrimidine synthase (436 aa).

Substrate contacts are provided by residues Asn-69, Met-98, Tyr-127, His-163, 185-187 (SRG), 226-229 (DACR), and Glu-265. His-269 serves as a coordination point for Zn(2+). Tyr-292 contributes to the substrate binding site. Residue His-333 coordinates Zn(2+). Positions 409, 412, and 416 each coordinate [4Fe-4S] cluster.

The protein belongs to the ThiC family. The cofactor is [4Fe-4S] cluster.

The enzyme catalyses 5-amino-1-(5-phospho-beta-D-ribosyl)imidazole + S-adenosyl-L-methionine = 4-amino-2-methyl-5-(phosphooxymethyl)pyrimidine + CO + 5'-deoxyadenosine + formate + L-methionine + 3 H(+). It participates in cofactor biosynthesis; thiamine diphosphate biosynthesis. Functionally, catalyzes the synthesis of the hydroxymethylpyrimidine phosphate (HMP-P) moiety of thiamine from aminoimidazole ribotide (AIR) in a radical S-adenosyl-L-methionine (SAM)-dependent reaction. This is Phosphomethylpyrimidine synthase from Clostridium perfringens (strain ATCC 13124 / DSM 756 / JCM 1290 / NCIMB 6125 / NCTC 8237 / Type A).